A 214-amino-acid chain; its full sequence is Leucyl/phenylalanyl-tRNA--protein transferase (214 aa).

This sequence belongs to the L/F-transferase family.

It is found in the cytoplasm. It carries out the reaction N-terminal L-lysyl-[protein] + L-leucyl-tRNA(Leu) = N-terminal L-leucyl-L-lysyl-[protein] + tRNA(Leu) + H(+). The catalysed reaction is N-terminal L-arginyl-[protein] + L-leucyl-tRNA(Leu) = N-terminal L-leucyl-L-arginyl-[protein] + tRNA(Leu) + H(+). The enzyme catalyses L-phenylalanyl-tRNA(Phe) + an N-terminal L-alpha-aminoacyl-[protein] = an N-terminal L-phenylalanyl-L-alpha-aminoacyl-[protein] + tRNA(Phe). In terms of biological role, functions in the N-end rule pathway of protein degradation where it conjugates Leu, Phe and, less efficiently, Met from aminoacyl-tRNAs to the N-termini of proteins containing an N-terminal arginine or lysine. The protein is Leucyl/phenylalanyl-tRNA--protein transferase of Cereibacter sphaeroides (strain ATCC 17023 / DSM 158 / JCM 6121 / CCUG 31486 / LMG 2827 / NBRC 12203 / NCIMB 8253 / ATH 2.4.1.) (Rhodobacter sphaeroides).